The chain runs to 897 residues: 3'-5' exonuclease DinG (897 aa).

The Exonuclease domain maps to 8–161 (VVDLETTGNQ…DEDAATTAKL (154 aa)). Residues 241 to 496 (SKAVDQLGLT…KAIDQLEKQR (256 aa)) form the Helicase ATP-binding domain. 276-283 (ASLGSGKS) contributes to the ATP binding site. The DEAH box signature appears at 448–451 (DEAH). The 181-residue stretch at 703–883 (NIDEYVASIV…NYRQKKGDIQ (181 aa)) folds into the Helicase C-terminal domain.

The protein belongs to the helicase family. DinG subfamily. Type 2 sub-subfamily.

3'-5' exonuclease. This Staphylococcus aureus (strain bovine RF122 / ET3-1) protein is 3'-5' exonuclease DinG.